We begin with the raw amino-acid sequence, 448 residues long: Antizyme inhibitor 1 (448 aa).

This sequence belongs to the Orn/Lys/Arg decarboxylase class-II family. ODC antizyme inhibitor subfamily. Monomer. Interacts with OAZ1 and OAZ3; this interaction disrupts the interaction between the antizyme and ODC1. Ubiquitinated, leading to its proteasomal degradation; a process that is reduced in presence of antizyme OAZ1. Expressed in various tissues including liver, heart and kidney.

Its subcellular location is the nucleus. Functionally, antizyme inhibitor (AZI) protein that positively regulates ornithine decarboxylase (ODC) activity and polyamine uptake. AZI is an enzymatically inactive ODC homolog that counteracts the negative effect of ODC antizymes (AZs) OAZ1, OAZ2 and OAZ3 on ODC activity by competing with ODC for antizyme-binding. Inhibits antizyme-dependent ODC degradation and releases ODC monomers from their inactive complex with antizymes, leading to formation of the catalytically active ODC homodimer and restoring polyamine production. The protein is Antizyme inhibitor 1 (Azin1) of Rattus norvegicus (Rat).